A 354-amino-acid polypeptide reads, in one-letter code: cAMP-dependent protein kinase catalytic subunit 2 (354 aa).

Positions 45-301 (YITRAVLGNG…SSDVKSHPWF (257 aa)) constitute a Protein kinase domain. ATP-binding positions include 51–59 (LGNGSFGTV) and lysine 74. Aspartate 168 (proton acceptor) is an active-site residue. The AGC-kinase C-terminal domain occupies 302–354 (QGVDWFGILNQEVTAPYQPTISGAEDLSNFENFEFKDRYKSRINRHPELFANF).

It belongs to the protein kinase superfamily. AGC Ser/Thr protein kinase family. cAMP subfamily. As to expression, more abundant in adult body than adult head.

The enzyme catalyses L-seryl-[protein] + ATP = O-phospho-L-seryl-[protein] + ADP + H(+). The catalysed reaction is L-threonyl-[protein] + ATP = O-phospho-L-threonyl-[protein] + ADP + H(+). The protein is cAMP-dependent protein kinase catalytic subunit 2 (Pka-C2) of Drosophila melanogaster (Fruit fly).